The following is a 172-amino-acid chain: ATP synthase subunit b (172 aa).

Residues 5–24 form a helical membrane-spanning segment; the sequence is LLMLLLLGSVSLFANEAAAS.

This sequence belongs to the ATPase B chain family. As to quaternary structure, F-type ATPases have 2 components, F(1) - the catalytic core - and F(0) - the membrane proton channel. F(1) has five subunits: alpha(3), beta(3), gamma(1), delta(1), epsilon(1). F(0) has three main subunits: a(1), b(2) and c(10-14). The alpha and beta chains form an alternating ring which encloses part of the gamma chain. F(1) is attached to F(0) by a central stalk formed by the gamma and epsilon chains, while a peripheral stalk is formed by the delta and b chains.

The protein resides in the cell inner membrane. F(1)F(0) ATP synthase produces ATP from ADP in the presence of a proton or sodium gradient. F-type ATPases consist of two structural domains, F(1) containing the extramembraneous catalytic core and F(0) containing the membrane proton channel, linked together by a central stalk and a peripheral stalk. During catalysis, ATP synthesis in the catalytic domain of F(1) is coupled via a rotary mechanism of the central stalk subunits to proton translocation. Functionally, component of the F(0) channel, it forms part of the peripheral stalk, linking F(1) to F(0). The chain is ATP synthase subunit b from Nitratiruptor sp. (strain SB155-2).